Reading from the N-terminus, the 176-residue chain is NAD(P)H-quinone oxidoreductase subunit 6, chloroplastic (176 aa).

Transmembrane regions (helical) follow at residues 10–30, 33–53, 60–80, 95–115, and 152–172; these read ILML…VLLT, IYSA…YFLL, VAQL…AVMF, IGDG…MTTI, and FYLP…GAIT.

This sequence belongs to the complex I subunit 6 family. As to quaternary structure, NDH is composed of at least 16 different subunits, 5 of which are encoded in the nucleus.

It is found in the plastid. Its subcellular location is the chloroplast thylakoid membrane. The enzyme catalyses a plastoquinone + NADH + (n+1) H(+)(in) = a plastoquinol + NAD(+) + n H(+)(out). It catalyses the reaction a plastoquinone + NADPH + (n+1) H(+)(in) = a plastoquinol + NADP(+) + n H(+)(out). NDH shuttles electrons from NAD(P)H:plastoquinone, via FMN and iron-sulfur (Fe-S) centers, to quinones in the photosynthetic chain and possibly in a chloroplast respiratory chain. The immediate electron acceptor for the enzyme in this species is believed to be plastoquinone. Couples the redox reaction to proton translocation, and thus conserves the redox energy in a proton gradient. This Hordeum vulgare (Barley) protein is NAD(P)H-quinone oxidoreductase subunit 6, chloroplastic (ndhG).